The sequence spans 135 residues: Class I hydrophobin 2 (135 aa).

Positions 1–20 (MFARLTSTLFALAAVSAVFA) are cleaved as a signal peptide. 4 cysteine pairs are disulfide-bonded: Cys-29–Cys-114, Cys-36–Cys-107, Cys-37–Cys-73, and Cys-115–Cys-128. N-linked (GlcNAc...) asparagine glycans are attached at residues Asn-117 and Asn-132.

It belongs to the fungal hydrophobin family. In terms of assembly, self-assembles to form functional amyloid fibrils called rodlets. Self-assembly into fibrillar rodlets occurs spontaneously at hydrophobic:hydrophilic interfaces and the rodlets further associate laterally to form amphipathic monolayers.

It localises to the secreted. It is found in the cell wall. In terms of biological role, aerial growth, conidiation, and dispersal of filamentous fungi in the environment rely upon a capability of their secreting small amphipathic proteins called hydrophobins (HPBs) with low sequence identity. Class I can self-assemble into an outermost layer of rodlet bundles on aerial cell surfaces, conferring cellular hydrophobicity that supports fungal growth, development and dispersal; whereas Class II form highly ordered films at water-air interfaces through intermolecular interactions but contribute nothing to the rodlet structure. The polypeptide is Class I hydrophobin 2 (Coprinopsis cinerea (strain Okayama-7 / 130 / ATCC MYA-4618 / FGSC 9003) (Inky cap fungus)).